The following is a 186-amino-acid chain: Large ribosomal subunit protein uL5 (186 aa).

This sequence belongs to the universal ribosomal protein uL5 family. In terms of assembly, part of the 50S ribosomal subunit; contacts the 5S rRNA and probably tRNA. Forms a bridge to the 30S subunit in the 70S ribosome.

In terms of biological role, this is one of the proteins that bind and probably mediate the attachment of the 5S RNA into the large ribosomal subunit, where it forms part of the central protuberance. In the 70S ribosome it contacts protein S13 of the 30S subunit (bridge B1b), connecting the 2 subunits; this bridge is implicated in subunit movement. May contact the P site tRNA; the 5S rRNA and some of its associated proteins might help stabilize positioning of ribosome-bound tRNAs. This Methanopyrus kandleri (strain AV19 / DSM 6324 / JCM 9639 / NBRC 100938) protein is Large ribosomal subunit protein uL5.